The sequence spans 304 residues: MNLQALIEDIRQQVLPFYDQGRVADYIPALASVPPHQFGIAIHTLDGREHACGDADTPFSIQSISKAFMLALTLQADGEQLWRHVGKEPSGNPFNSLVQLEYEHGIPRNPFINAGALVVTDRAIGHFGDAHARLLAWLREETGNAGLMADQAIAASERAHGDRNAALAHFMKSYGNLGHPVETVLDQYFHNCSIAMSCRELARAGLFLANHGLSPQTGTQYLSRSQAKQVNAVMLTCGTYDAAGEFAYRVGLPVKSGVGGGLLAVIPGKMAIAAWSPQLDARGNSVLGLEALDRFTTRTGLSIF.

7 residues coordinate substrate: Ser63, Asn113, Glu157, Asn164, Tyr188, Tyr240, and Val258.

Belongs to the glutaminase family. Homotetramer.

The enzyme catalyses L-glutamine + H2O = L-glutamate + NH4(+). This chain is Glutaminase, found in Chromobacterium violaceum (strain ATCC 12472 / DSM 30191 / JCM 1249 / CCUG 213 / NBRC 12614 / NCIMB 9131 / NCTC 9757 / MK).